Reading from the N-terminus, the 319-residue chain is Acetyl-coenzyme A carboxylase carboxyl transferase subunit alpha (319 aa).

The region spanning 32–293 is the CoA carboxyltransferase C-terminal domain; it reads NIQEEISRLQ…HTALAEALQT (262 aa).

It belongs to the AccA family. As to quaternary structure, acetyl-CoA carboxylase is a heterohexamer composed of biotin carboxyl carrier protein (AccB), biotin carboxylase (AccC) and two subunits each of ACCase subunit alpha (AccA) and ACCase subunit beta (AccD).

The protein resides in the cytoplasm. It catalyses the reaction N(6)-carboxybiotinyl-L-lysyl-[protein] + acetyl-CoA = N(6)-biotinyl-L-lysyl-[protein] + malonyl-CoA. The protein operates within lipid metabolism; malonyl-CoA biosynthesis; malonyl-CoA from acetyl-CoA: step 1/1. In terms of biological role, component of the acetyl coenzyme A carboxylase (ACC) complex. First, biotin carboxylase catalyzes the carboxylation of biotin on its carrier protein (BCCP) and then the CO(2) group is transferred by the carboxyltransferase to acetyl-CoA to form malonyl-CoA. The sequence is that of Acetyl-coenzyme A carboxylase carboxyl transferase subunit alpha from Thioalkalivibrio sulfidiphilus (strain HL-EbGR7).